Here is a 348-residue protein sequence, read N- to C-terminus: N-formyl peptide receptor 2 (348 aa).

N1 carries an N-linked (GlcNAc...) asparagine glycan. Over N1–I24 the chain is Extracellular. The helical transmembrane segment at L25–V47 threads the bilayer. Topologically, residues A48–T58 are cytoplasmic. The chain crosses the membrane as a helical span at residues I59–V80. Residues S81 to L97 are Extracellular-facing. C95 and C173 are disulfide-bonded. Residues I98–L118 traverse the membrane as a helical segment. The Cytoplasmic segment spans residues D119–S137. Residues L138 to L159 traverse the membrane as a helical segment. Residues F160–R202 are Extracellular-facing. Residues F203–A223 traverse the membrane as a helical segment. Over K224 to V239 the chain is Cytoplasmic. A helical transmembrane segment spans residues L240–V263. Residues W264 to P283 lie on the Extracellular side of the membrane. A helical membrane pass occupies residues T284–G303. The Cytoplasmic segment spans residues Q304–M348. The interval L322–M348 is disordered. Residues S326–N335 show a composition bias toward polar residues.

The protein belongs to the G-protein coupled receptor 1 family. Interacts with Amyloid-beta protein 42, product of APP; the interaction takes place at the cell surface and the complex is then rapidly internalized.

Its subcellular location is the cell membrane. Low affinity receptor for N-formyl-methionyl peptides, which are powerful neutrophil chemotactic factors. Binding of FMLP to the receptor causes activation of neutrophils. This response is mediated via a G-protein that activates a phosphatidylinositol-calcium second messenger system. Receptor for the chemokine-like protein FAM19A5, mediating FAM19A5-stimulated macrophage chemotaxis and the inhibitory effect on TNFSF11/RANKL-induced osteoclast differentiation. This chain is N-formyl peptide receptor 2 (FPR2), found in Pan troglodytes (Chimpanzee).